Consider the following 66-residue polypeptide: Vesicular acetylcholine transporter (66 aa).

Residues 1-15 (GMGLANLLYAPVLLL) form a helical membrane-spanning segment. At 16–66 (LRNVGLLTRSRSERDVLLDEPPQGLYDAVRLRERPVSGQDGEPRSPPGPFD) the chain is on the cytoplasmic side. Positions 43–66 (AVRLRERPVSGQDGEPRSPPGPFD) are disordered.

Belongs to the major facilitator superfamily. Vesicular transporter family. In terms of assembly, interacts with SEC14L1.

It is found in the cytoplasmic vesicle. The protein resides in the secretory vesicle. The protein localises to the synaptic vesicle membrane. The catalysed reaction is acetylcholine(out) + 2 H(+)(in) = acetylcholine(in) + 2 H(+)(out). It carries out the reaction choline(in) + 2 H(+)(out) = choline(out) + 2 H(+)(in). The enzyme catalyses serotonin(in) + 2 H(+)(out) = serotonin(out) + 2 H(+)(in). Electrogenic antiporter that exchanges one cholinergic neurotransmitter, acetylcholine or choline, with two intravesicular protons across the membrane of synaptic vesicles. Uses the electrochemical proton gradient established by the V-type proton-pump ATPase to store neurotransmitters inside the vesicles prior to their release via exocytosis. Determines cholinergic vesicular quantal size at presynaptic nerve terminals in developing neuro-muscular junctions with an impact on motor neuron differentiation and innervation pattern. Part of forebrain cholinergic system, regulates hippocampal synapse transmissions that underlie spatial memory formation. Can transport serotonin. This Macaca fuscata fuscata (Japanese macaque) protein is Vesicular acetylcholine transporter (SLC18A3).